A 318-amino-acid chain; its full sequence is UDP-3-O-acylglucosamine N-acyltransferase (318 aa).

The active-site Proton acceptor is His-231.

It belongs to the transferase hexapeptide repeat family. LpxD subfamily. In terms of assembly, homotrimer.

It catalyses the reaction a UDP-3-O-[(3R)-3-hydroxyacyl]-alpha-D-glucosamine + a (3R)-hydroxyacyl-[ACP] = a UDP-2-N,3-O-bis[(3R)-3-hydroxyacyl]-alpha-D-glucosamine + holo-[ACP] + H(+). Its pathway is bacterial outer membrane biogenesis; LPS lipid A biosynthesis. Its function is as follows. Catalyzes the N-acylation of UDP-3-O-acylglucosamine using 3-hydroxyacyl-ACP as the acyl donor. Is involved in the biosynthesis of lipid A, a phosphorylated glycolipid that anchors the lipopolysaccharide to the outer membrane of the cell. The polypeptide is UDP-3-O-acylglucosamine N-acyltransferase (Campylobacter jejuni subsp. doylei (strain ATCC BAA-1458 / RM4099 / 269.97)).